Consider the following 352-residue polypeptide: Nicotinate-nucleotide--dimethylbenzimidazole phosphoribosyltransferase (352 aa).

E318 serves as the catalytic Proton acceptor.

This sequence belongs to the CobT family.

It carries out the reaction 5,6-dimethylbenzimidazole + nicotinate beta-D-ribonucleotide = alpha-ribazole 5'-phosphate + nicotinate + H(+). It functions in the pathway nucleoside biosynthesis; alpha-ribazole biosynthesis; alpha-ribazole from 5,6-dimethylbenzimidazole: step 1/2. Catalyzes the synthesis of alpha-ribazole-5'-phosphate from nicotinate mononucleotide (NAMN) and 5,6-dimethylbenzimidazole (DMB). The polypeptide is Nicotinate-nucleotide--dimethylbenzimidazole phosphoribosyltransferase (Geotalea uraniireducens (strain Rf4) (Geobacter uraniireducens)).